A 459-amino-acid polypeptide reads, in one-letter code: Trichothecene 3-O-acetyltransferase TRI101 (459 aa).

Ca(2+) is bound by residues Asp-218 and Ile-221. CoA is bound by residues Lys-253, 266–269 (FVST), Asp-302, Gln-318, and Arg-343. Asp-376 provides a ligand contact to Ca(2+). CoA contacts are provided by Ser-386 and Lys-390. Glu-449 serves as a coordination point for Ca(2+).

The protein belongs to the trichothecene 3-O-acetyltransferase family.

It functions in the pathway sesquiterpene biosynthesis; trichothecene biosynthesis. 3-O-acetyltransferase involved in the biosynthesis of trichothecenes, a very large family of chemically related bicyclic sesquiterpene compounds acting as mycotoxins, including T2-toxin. The biosynthesis of trichothecenes begins with the cyclization of farnesyl diphosphate to trichodiene and is catalyzed by the trichodiene synthase TRI5. Trichodiene undergoes a series of oxygenations catalyzed by the cytochrome P450 monooxygenase TRI4. TRI4 controls the addition of four oxygens at C-2, C-3, C-11, and the C-12, C-13-epoxide to form the intermediate isotrichotriol. Isotrichotriol then undergoes a non-enzymatic isomerization and cyclization to form isotrichodermol. During this process, the oxygen at the C-2 position becomes the pyran ring oxygen and the hydroxyl group at C-11 is lost. More complex type A trichothecenes are built by modifying isotrichodermol through a series of paired hydroxylation and acetylation or acylation steps. Isotrichodermol is converted to isotrichodermin by the acetyltransferase TRI101. TRI101 encodes a C-3 transacetylase that acts as a self-protection or resistance factor during biosynthesis and that the presence of a free C-3 hydroxyl group is a key component of Fusarium trichothecene phytotoxicity. A second hydroxyl group is added to C-15 by the trichothecene C-15 hydroxylase TRI11, producing 15-decalonectrin, which is then acetylated by TRI3, producing calonectrin. A third hydroxyl group is added at C-4 by the cytochrome P450 monooxygenase TRI13, converting calonectrin to 3,15-diacetoxyspirpenol, which is subsequently acetylated bythe acetyltransferase TRI7. A fourth hydroxyl group is added to C-8 by the cytochrome P450 monooxygenase TRI1, followed by the addition of an isovaleryl moiety by TRI16. Finally, the acetyl group is removed from the C-3 position by the trichothecene C-3 esterase TRI8 to produce T-2 toxin. The polypeptide is Trichothecene 3-O-acetyltransferase TRI101 (Fusarium sporotrichioides).